The sequence spans 641 residues: Probable ATP-dependent helicase YpvA (641 aa).

One can recognise a Helicase ATP-binding domain in the interval 29-303 (YDILPEKGFD…EFAELIEDAL (275 aa)). 64–71 (AGVGTGKT) contributes to the ATP binding site. 4 residues coordinate [4Fe-4S] cluster: cysteine 133, cysteine 197, cysteine 200, and cysteine 206. The DEGH box signature appears at 257 to 260 (DEGH).

The protein belongs to the helicase family. DinG subfamily. It depends on [4Fe-4S] cluster as a cofactor.

It carries out the reaction Couples ATP hydrolysis with the unwinding of duplex DNA at the replication fork by translocating in the 5'-3' direction. This creates two antiparallel DNA single strands (ssDNA). The leading ssDNA polymer is the template for DNA polymerase III holoenzyme which synthesizes a continuous strand.. The enzyme catalyses ATP + H2O = ADP + phosphate + H(+). Functionally, might be a 5'-3' DNA helicase. This is Probable ATP-dependent helicase YpvA (ypvA) from Bacillus subtilis (strain 168).